Here is a 267-residue protein sequence, read N- to C-terminus: Tryptophan synthase alpha chain (267 aa).

Catalysis depends on proton acceptor residues Glu-49 and Asp-60.

The protein belongs to the TrpA family. Tetramer of two alpha and two beta chains.

It carries out the reaction (1S,2R)-1-C-(indol-3-yl)glycerol 3-phosphate + L-serine = D-glyceraldehyde 3-phosphate + L-tryptophan + H2O. It functions in the pathway amino-acid biosynthesis; L-tryptophan biosynthesis; L-tryptophan from chorismate: step 5/5. Its function is as follows. The alpha subunit is responsible for the aldol cleavage of indoleglycerol phosphate to indole and glyceraldehyde 3-phosphate. This Geotalea uraniireducens (strain Rf4) (Geobacter uraniireducens) protein is Tryptophan synthase alpha chain.